A 150-amino-acid polypeptide reads, in one-letter code: Lipoprotein signal peptidase (150 aa).

Transmembrane regions (helical) follow at residues 5–25 (LSLV…NWVV), 59–79 (QQWF…WFLW), and 83–103 (GQNW…GNFI). Active-site residues include Asp113 and Asp129. A helical membrane pass occupies residues 124 to 144 (IFNIADILLSVGFVVLFIAIL).

It belongs to the peptidase A8 family.

It localises to the cell membrane. The catalysed reaction is Release of signal peptides from bacterial membrane prolipoproteins. Hydrolyzes -Xaa-Yaa-Zaa-|-(S,diacylglyceryl)Cys-, in which Xaa is hydrophobic (preferably Leu), and Yaa (Ala or Ser) and Zaa (Gly or Ala) have small, neutral side chains.. The protein operates within protein modification; lipoprotein biosynthesis (signal peptide cleavage). In terms of biological role, this protein specifically catalyzes the removal of signal peptides from prolipoproteins. This chain is Lipoprotein signal peptidase, found in Lactococcus lactis subsp. cremoris (strain MG1363).